The primary structure comprises 233 residues: uncharacterized protein (233 aa).

It belongs to the asfivirus H233R family.

This is an uncharacterized protein from Ornithodoros (relapsing fever ticks).